Reading from the N-terminus, the 315-residue chain is MPSFTLIVPTYNAGTARWNEWFHAFQKQTNQPSQLIIIDSSSTDDTRNIASTYTNNIIVISPSEFNHGGTRNKALASAEESDFVVFLTQDAIFENKNALEEILSLFNDKNVAAVCGRQLPHHDANPLAIHARNFNYGTETLIKSKNDIKNLGIKTVFMSNSFAAYRRSVFEALGGFPEHTILAEDMFMAARMIQAGYKIAYCAEASVRHSHNYTPRQEFQRYFDTGVFHACNPWIQRDFGGAGGEGFRFVKSEIQFLLKNAPFWIPRALLTTFAKFLGYKLGKHWQSLPLSTCRYFSMYKSYWNNIQYSSSKEIK.

This sequence belongs to the glycosyltransferase 2 family.

It catalyses the reaction alpha-D-galactosyl-di-trans,octa-cis-undecaprenyl diphosphate + dTDP-beta-L-rhamnose = alpha-L-rhamnosyl-(1-&gt;3)-alpha-D-galactosyl-1-diphospho-di-trans,octa-cis-undecaprenol + dTDP + H(+). It functions in the pathway bacterial outer membrane biogenesis; LPS O-antigen biosynthesis. Functionally, rhamnosyltransferase involved in the biosynthesis of the repeat unit of the lipopolysaccharide (LPS) O-antigen region. Catalyzes the addition of a rhamnose to the galactosyl-undecaprenyl diphosphate intermediate. This chain is O-antigen chain rhamnosyltransferase WbaN, found in Salmonella anatum.